Reading from the N-terminus, the 135-residue chain is uncharacterized protein (135 aa).

Residues 35 to 55 (VVLVLIGATIILVVISVLVVS) traverse the membrane as a helical segment.

Its subcellular location is the membrane. This is an uncharacterized protein from Saccharomyces cerevisiae (strain ATCC 204508 / S288c) (Baker's yeast).